The sequence spans 359 residues: ATP synthase subunit gamma, chloroplastic (359 aa).

A chloroplast-targeting transit peptide spans 1–35; sequence MSCSHLSTAWSSSALASSASTTRRRSPPRSGLLVR. Residue cysteine 124 is part of the active site. Cysteine 234 and cysteine 240 form a disulfide bridge.

It belongs to the ATPase gamma chain family. In terms of assembly, F-type ATPases have 2 components, CF(1) - the catalytic core - and CF(0) - the membrane proton channel. CF(1) has five subunits: alpha(3), beta(3), gamma(1), delta(1), epsilon(1). CF(0) has four main subunits: a, b, b' and c.

The protein localises to the plastid. Its subcellular location is the chloroplast thylakoid membrane. In terms of biological role, produces ATP from ADP in the presence of a proton gradient across the membrane. The gamma chain is believed to be important in regulating ATPase activity and the flow of protons through the CF(0) complex. Its function is as follows. Inceptin is a proteolytic fragment produced by insect larvae that previously ingested the protein. This peptide mediate plant perception of herbivory through the induction of volatile, phenylpropanoid and protease inhibitor defenses such as ethylene, jasmonic acid and salicylic acid for example. The chain is ATP synthase subunit gamma, chloroplastic from Zea mays (Maize).